A 212-amino-acid polypeptide reads, in one-letter code: NAD(P)H dehydrogenase (quinone) 3 (212 aa).

One can recognise a Flavodoxin-like domain in the interval 4-192 (MLVLYYSSYG…DGARFQGRHV (189 aa)). FMN is bound by residues 10–15 (SSYGHI) and 78–80 (TRF). NAD(+) is bound at residue Y12. W98 contacts substrate. FMN is bound by residues 113–119 (STGSQHG) and H134. Residues 161 to 182 (YGASTLAEDENHRDRSPSANEL) are disordered.

It belongs to the WrbA family. It depends on FMN as a cofactor.

It catalyses the reaction a quinone + NADH + H(+) = a quinol + NAD(+). It carries out the reaction a quinone + NADPH + H(+) = a quinol + NADP(+). The protein is NAD(P)H dehydrogenase (quinone) 3 of Rhizobium meliloti (strain 1021) (Ensifer meliloti).